We begin with the raw amino-acid sequence, 190 residues long: MLSCLSKPALRCRSVNRLQFLRKLSLQEIQTLKTQHQYLGRTRLDVETPSLKPSAAGSGSTAPKPVTEREIASTRFMPRKNVIKLTPLAVEHLKKMQSSASMKGKMLRIGVKQKGCAGQAYSLEYIEKPDKFDEIVKQDGISIIVARRALLQIIGSVMDYRDDDLQSRFIFSNPNVKSTCGCGESFSTLK.

The interval 49–71 (PSLKPSAAGSGSTAPKPVTEREI) is disordered. Fe cation contacts are provided by cysteine 116, cysteine 180, and cysteine 182.

Belongs to the HesB/IscA family.

Its subcellular location is the mitochondrion matrix. Its function is as follows. Involved in the assembly of mitochondrial and cytoplasmic iron-sulfur proteins. Probably involved in the binding of an intermediate of Fe/S cluster assembly. The protein is Iron-sulfur assembly protein 1 (isa1) of Schizosaccharomyces pombe (strain 972 / ATCC 24843) (Fission yeast).